Here is a 676-residue protein sequence, read N- to C-terminus: DNA ligase (676 aa).

NAD(+) is bound by residues 35–39 (DAEYD), 84–85 (SL), and E118. K120 serves as the catalytic N6-AMP-lysine intermediate. 4 residues coordinate NAD(+): R141, E176, K284, and K308. The Zn(2+) site is built by C402, C405, C420, and C426. In terms of domain architecture, BRCT spans 595 to 676 (SYLSLIHGKI…WLQYTQSSEN (82 aa)).

The protein belongs to the NAD-dependent DNA ligase family. LigA subfamily. Mg(2+) serves as cofactor. Mn(2+) is required as a cofactor.

It catalyses the reaction NAD(+) + (deoxyribonucleotide)n-3'-hydroxyl + 5'-phospho-(deoxyribonucleotide)m = (deoxyribonucleotide)n+m + AMP + beta-nicotinamide D-nucleotide.. DNA ligase that catalyzes the formation of phosphodiester linkages between 5'-phosphoryl and 3'-hydroxyl groups in double-stranded DNA using NAD as a coenzyme and as the energy source for the reaction. It is essential for DNA replication and repair of damaged DNA. The sequence is that of DNA ligase from Ehrlichia chaffeensis (strain ATCC CRL-10679 / Arkansas).